A 113-amino-acid polypeptide reads, in one-letter code: Iron-sulfur cluster insertion protein ErpA (113 aa).

Iron-sulfur cluster contacts are provided by Cys41, Cys105, and Cys107.

It belongs to the HesB/IscA family. As to quaternary structure, homodimer. Iron-sulfur cluster serves as cofactor.

Required for insertion of 4Fe-4S clusters for at least IspG. The protein is Iron-sulfur cluster insertion protein ErpA of Actinobacillus pleuropneumoniae serotype 3 (strain JL03).